We begin with the raw amino-acid sequence, 201 residues long: FMN-dependent NADH:quinone oxidoreductase (201 aa).

FMN is bound by residues serine 10, serine 16–serine 18, methionine 96–phenylalanine 99, and serine 140–glycine 143.

This sequence belongs to the azoreductase type 1 family. Homodimer. It depends on FMN as a cofactor.

The catalysed reaction is 2 a quinone + NADH + H(+) = 2 a 1,4-benzosemiquinone + NAD(+). The enzyme catalyses N,N-dimethyl-1,4-phenylenediamine + anthranilate + 2 NAD(+) = 2-(4-dimethylaminophenyl)diazenylbenzoate + 2 NADH + 2 H(+). In terms of biological role, quinone reductase that provides resistance to thiol-specific stress caused by electrophilic quinones. Also exhibits azoreductase activity. Catalyzes the reductive cleavage of the azo bond in aromatic azo compounds to the corresponding amines. This Pectobacterium atrosepticum (strain SCRI 1043 / ATCC BAA-672) (Erwinia carotovora subsp. atroseptica) protein is FMN-dependent NADH:quinone oxidoreductase.